A 534-amino-acid polypeptide reads, in one-letter code: Arginine--tRNA ligase (534 aa).

Positions 120 to 130 (ANPTGFLHLGH) match the 'HIGH' region motif.

The protein belongs to the class-I aminoacyl-tRNA synthetase family. In terms of assembly, monomer.

It is found in the cytoplasm. It catalyses the reaction tRNA(Arg) + L-arginine + ATP = L-arginyl-tRNA(Arg) + AMP + diphosphate. The polypeptide is Arginine--tRNA ligase (Mesomycoplasma hyopneumoniae (strain 7448) (Mycoplasma hyopneumoniae)).